Here is a 122-residue protein sequence, read N- to C-terminus: Small ribosomal subunit protein uS13 (122 aa).

Residues 95 to 116 (GLPVRGQKTKTNARTRKGRRKT) are compositionally biased toward basic residues. The segment at 95-122 (GLPVRGQKTKTNARTRKGRRKTVGAATK) is disordered.

This sequence belongs to the universal ribosomal protein uS13 family. In terms of assembly, part of the 30S ribosomal subunit. Forms a loose heterodimer with protein S19. Forms two bridges to the 50S subunit in the 70S ribosome.

Located at the top of the head of the 30S subunit, it contacts several helices of the 16S rRNA. In the 70S ribosome it contacts the 23S rRNA (bridge B1a) and protein L5 of the 50S subunit (bridge B1b), connecting the 2 subunits; these bridges are implicated in subunit movement. Contacts the tRNAs in the A and P-sites. The chain is Small ribosomal subunit protein uS13 from Campylobacter curvus (strain 525.92).